Consider the following 271-residue polypeptide: Phosphate import ATP-binding protein PstB (271 aa).

In terms of domain architecture, ABC transporter spans 25 to 266 (VDVRQLSLWY…PKHPYTEAYI (242 aa)). 57-64 (GPSGCGKS) lines the ATP pocket.

The protein belongs to the ABC transporter superfamily. Phosphate importer (TC 3.A.1.7) family. The complex is composed of two ATP-binding proteins (PstB), two transmembrane proteins (PstC and PstA) and a solute-binding protein (PstS).

Its subcellular location is the cell inner membrane. The catalysed reaction is phosphate(out) + ATP + H2O = ADP + 2 phosphate(in) + H(+). In terms of biological role, part of the ABC transporter complex PstSACB involved in phosphate import. Responsible for energy coupling to the transport system. The protein is Phosphate import ATP-binding protein PstB of Thermus thermophilus (strain ATCC BAA-163 / DSM 7039 / HB27).